The sequence spans 275 residues: Diaminopimelate epimerase (275 aa).

Asparagine 12, glutamine 45, and asparagine 65 together coordinate substrate. Cysteine 74 serves as the catalytic Proton donor. Substrate is bound by residues glycine 75–asparagine 76, asparagine 158, asparagine 191, and glutamate 209–arginine 210. The active-site Proton acceptor is the cysteine 218. Glycine 219–threonine 220 lines the substrate pocket.

Belongs to the diaminopimelate epimerase family. In terms of assembly, homodimer.

It is found in the cytoplasm. It carries out the reaction (2S,6S)-2,6-diaminopimelate = meso-2,6-diaminopimelate. It functions in the pathway amino-acid biosynthesis; L-lysine biosynthesis via DAP pathway; DL-2,6-diaminopimelate from LL-2,6-diaminopimelate: step 1/1. Catalyzes the stereoinversion of LL-2,6-diaminopimelate (L,L-DAP) to meso-diaminopimelate (meso-DAP), a precursor of L-lysine and an essential component of the bacterial peptidoglycan. The sequence is that of Diaminopimelate epimerase from Shewanella putrefaciens (strain CN-32 / ATCC BAA-453).